Here is a 579-residue protein sequence, read N- to C-terminus: MNIRNLLNDRVKSAMNDAGIPADYSPHLAVSKKAGFGDYQANGAMGAAKALKTNPREVAQKIIDNLDLNGIASKVEIAGPGFINIHLDPKWLAQQTVAVTNSTNLGILPKNNPETVVIDYSSPNLAKEMHVGHLRSTIIGDAIARVLEFTGDKVIRQNHVGDWGTQFGMLIAELEDQLGSGERPELALQDLEGFYQQAKKHFDDDPAFADRARDYVVKLQSGDAQVNKLWQEFRRVSLLHAEEIYRKLNVTLGEADVRGESAYNDDLAPVVAELEAQGLAVEDQGAKVVFLHELADKNGDPSVAIIQKKDGGYLYSTSDLAALRYRVGTLKANRILYFIDARQSLHMQQVFTLARKAGFADEWLSTEHHAFGTMLGSDGKPFKTRSGGTVKLAQLLDEAVERAAKEVRTKNPDLTEEEMAEVASKVGIGAVKYADLCKTRTNDYVFNWESMLAFEGNTGPYMQYAYTRIRSIFRRANENMDTFESEVNLTEPQEVQLAIKLLQLPEIVEQIAADAYPHVMCNYLYDLASLFMTFYEACPILKEGVEPAVKTSRLQLSKGVARTLAQGLDLLGIEVMEKM.

The short motif at 123-133 (PNLAKEMHVGH) is the 'HIGH' region element.

Belongs to the class-I aminoacyl-tRNA synthetase family. In terms of assembly, monomer.

It is found in the cytoplasm. The enzyme catalyses tRNA(Arg) + L-arginine + ATP = L-arginyl-tRNA(Arg) + AMP + diphosphate. The chain is Arginine--tRNA ligase from Saccharophagus degradans (strain 2-40 / ATCC 43961 / DSM 17024).